Consider the following 353-residue polypeptide: Farnesyl pyrophosphate synthase (353 aa).

Positions 57, 60, and 96 each coordinate isopentenyl diphosphate. Lysine 57 bears the N6-(2-hydroxyisobutyryl)lysine; alternate mark. Lysine 57 is modified (N6-acetyllysine; alternate). The Mg(2+) site is built by aspartate 103 and aspartate 107. Arginine 112 contacts dimethylallyl diphosphate. Arginine 113 serves as a coordination point for isopentenyl diphosphate. Dimethylallyl diphosphate contacts are provided by lysine 200, threonine 201, glutamine 240, lysine 257, and lysine 266.

It belongs to the FPP/GGPP synthase family. In terms of assembly, homodimer. Interacts with RSAD2. The cofactor is Mg(2+). In terms of tissue distribution, testis, liver, kidney, brain and adrenal gland.

It is found in the cytoplasm. It catalyses the reaction isopentenyl diphosphate + dimethylallyl diphosphate = (2E)-geranyl diphosphate + diphosphate. It carries out the reaction isopentenyl diphosphate + (2E)-geranyl diphosphate = (2E,6E)-farnesyl diphosphate + diphosphate. It functions in the pathway isoprenoid biosynthesis; farnesyl diphosphate biosynthesis; farnesyl diphosphate from geranyl diphosphate and isopentenyl diphosphate: step 1/1. The protein operates within isoprenoid biosynthesis; geranyl diphosphate biosynthesis; geranyl diphosphate from dimethylallyl diphosphate and isopentenyl diphosphate: step 1/1. With respect to regulation, inactivated by interferon-induced RSAD2. This inactivation may result of disruption of lipid rafts at the plasma membrane, and thus have an antiviral effect since many enveloped viruses need lipid rafts to bud efficiently out of the cell. Key enzyme in isoprenoid biosynthesis which catalyzes the formation of farnesyl diphosphate (FPP), a precursor for several classes of essential metabolites including sterols, dolichols, carotenoids, and ubiquinones. FPP also serves as substrate for protein farnesylation and geranylgeranylation. Catalyzes the sequential condensation of isopentenyl pyrophosphate with the allylic pyrophosphates, dimethylallyl pyrophosphate, and then with the resultant geranylpyrophosphate to the ultimate product farnesyl pyrophosphate. This chain is Farnesyl pyrophosphate synthase (Fdps), found in Rattus norvegicus (Rat).